The sequence spans 253 residues: Sec-independent protein translocase protein TatC (253 aa).

Helical transmembrane passes span 18 to 38, 69 to 89, 96 to 116, 151 to 171, 187 to 207, and 208 to 228; these read VSVG…KSIF, AIVI…APGL, VILP…AFSY, LILG…LAKV, IVVI…SQIF, and MALP…MVNP. The disordered stretch occupies residues 231–253; that stretch reads KDNENNNENNNENNTKENTKSES. Over residues 244–253 the composition is skewed to basic and acidic residues; sequence NTKENTKSES.

The protein belongs to the TatC family. As to quaternary structure, the Tat system comprises two distinct complexes: a TatABC complex, containing multiple copies of TatA, TatB and TatC subunits, and a separate TatA complex, containing only TatA subunits. Substrates initially bind to the TatABC complex, which probably triggers association of the separate TatA complex to form the active translocon.

The protein resides in the cell inner membrane. Its function is as follows. Part of the twin-arginine translocation (Tat) system that transports large folded proteins containing a characteristic twin-arginine motif in their signal peptide across membranes. Together with TatB, TatC is part of a receptor directly interacting with Tat signal peptides. The protein is Sec-independent protein translocase protein TatC of Helicobacter pylori (strain ATCC 700392 / 26695) (Campylobacter pylori).